We begin with the raw amino-acid sequence, 137 residues long: Large ribosomal subunit protein uL16 (137 aa).

It belongs to the universal ribosomal protein uL16 family. As to quaternary structure, part of the 50S ribosomal subunit.

Functionally, binds 23S rRNA and is also seen to make contacts with the A and possibly P site tRNAs. This chain is Large ribosomal subunit protein uL16, found in Acinetobacter baylyi (strain ATCC 33305 / BD413 / ADP1).